The chain runs to 118 residues: MIVGHGIDLQEISAIEKVYQRNPRFAQKILTEQELAIFESFPYKRRLSYLAGRWAGKEAFAKAIGTGIGRLTFQDIEILNDVRGCPILTKSPFKGNSFISISHSGNYVQASVILEDKK.

Residues D8 and E58 each coordinate Mg(2+).

Belongs to the P-Pant transferase superfamily. AcpS family. Mg(2+) is required as a cofactor.

The protein localises to the cytoplasm. It carries out the reaction apo-[ACP] + CoA = holo-[ACP] + adenosine 3',5'-bisphosphate + H(+). Transfers the 4'-phosphopantetheine moiety from coenzyme A to a Ser of acyl-carrier-protein. This is Holo-[acyl-carrier-protein] synthase from Streptococcus pyogenes serotype M28 (strain MGAS6180).